The following is a 1068-amino-acid chain: Phosphatidylinositol 4,5-bisphosphate 3-kinase catalytic subunit alpha isoform (1068 aa).

In terms of domain architecture, PI3K-ABD spans 16-105; the sequence is MPPRILVECL…QPFLKVIEPV (90 aa). The 103-residue stretch at 187–289 folds into the PI3K-RBD domain; the sequence is KGQIIVVIWV…GRMPNLMLMA (103 aa). Positions 330 to 487 constitute a C2 PI3K-type domain; it reads INSALRIKIL…DWFSSVVKFP (158 aa). Positions 517-694 constitute a PIK helical domain; sequence LARDNELREN…GLLLESYCRA (178 aa). Residues 765–1051 form the PI3K/PI4K catalytic domain; sequence RLEECRIMSS…QMNDAHHGGW (287 aa). Residues 771–777 are G-loop; it reads IMSSAKR. Residues 912–920 form a catalytic loop region; that stretch reads GIGDRHNSN. The tract at residues 931–957 is activation loop; that stretch reads HIDFGHFLDHKKKKFGYKRERVPFVLT.

Belongs to the PI3/PI4-kinase family. Heterodimer of a catalytic subunit PIK3CA and a p85 regulatory subunit (PIK3R1, PIK3R2 or PIK3R3). Interacts with IRS1 in nuclear extracts. Interacts with RUFY3. Interacts with RASD2. Interacts with APPL1. Interacts with HRAS and KRAS. Interaction with HRAS/KRAS is required for PI3K pathway signaling and cell proliferation stimulated by EGF and FGF2. Interacts with FAM83B; activates the PI3K/AKT signaling cascade.

The catalysed reaction is L-seryl-[protein] + ATP = O-phospho-L-seryl-[protein] + ADP + H(+). The enzyme catalyses a 1,2-diacyl-sn-glycero-3-phospho-(1D-myo-inositol) + ATP = a 1,2-diacyl-sn-glycero-3-phospho-(1D-myo-inositol-3-phosphate) + ADP + H(+). It catalyses the reaction a 1,2-diacyl-sn-glycero-3-phospho-(1D-myo-inositol-4,5-bisphosphate) + ATP = a 1,2-diacyl-sn-glycero-3-phospho-(1D-myo-inositol-3,4,5-trisphosphate) + ADP + H(+). It carries out the reaction 1,2-dioctanoyl-sn-glycero-3-phospho-(1D-myo-inositol-4,5-bisphosphate) + ATP = 1,2-dioctanoyl-sn-glycero-3-phospho-(1D-myo-inositol-3,4,5-trisphosphate) + ADP + H(+). The catalysed reaction is 1-octadecanoyl-2-(5Z,8Z,11Z,14Z)-eicosatetraenoyl-sn-glycero-3-phospho-1D-myo-inositol 4,5-bisphosphate + ATP = 1-octadecanoyl-2-(5Z,8Z,11Z,14Z-eicosatetraenoyl)-sn-glycero-3-phospho-(1D-myo-inositol 3,4,5-triphosphate) + ADP + H(+). The protein operates within phospholipid metabolism; phosphatidylinositol phosphate biosynthesis. In terms of biological role, phosphoinositide-3-kinase (PI3K) phosphorylates phosphatidylinositol (PI) and its phosphorylated derivatives at position 3 of the inositol ring to produce 3-phosphoinositides. Uses ATP and PtdIns(4,5)P2 (phosphatidylinositol 4,5-bisphosphate) to generate phosphatidylinositol 3,4,5-trisphosphate (PIP3). PIP3 plays a key role by recruiting PH domain-containing proteins to the membrane, including AKT1 and PDPK1, activating signaling cascades involved in cell growth, survival, proliferation, motility and morphology. Participates in cellular signaling in response to various growth factors. Involved in the activation of AKT1 upon stimulation by receptor tyrosine kinases ligands such as EGF, insulin, IGF1, VEGFA and PDGF. Involved in signaling via insulin-receptor substrate (IRS) proteins. Essential in endothelial cell migration during vascular development through VEGFA signaling, possibly by regulating RhoA activity. Required for lymphatic vasculature development, possibly by binding to RAS and by activation by EGF and FGF2, but not by PDGF. Regulates invadopodia formation through the PDPK1-AKT1 pathway. Participates in cardiomyogenesis in embryonic stem cells through a AKT1 pathway. Participates in vasculogenesis in embryonic stem cells through PDK1 and protein kinase C pathway. In addition to its lipid kinase activity, it displays a serine-protein kinase activity that results in the autophosphorylation of the p85alpha regulatory subunit as well as phosphorylation of other proteins such as 4EBP1, H-Ras, the IL-3 beta c receptor and possibly others. Plays a role in the positive regulation of phagocytosis and pinocytosis. This chain is Phosphatidylinositol 4,5-bisphosphate 3-kinase catalytic subunit alpha isoform (PIK3CA), found in Bos taurus (Bovine).